The primary structure comprises 502 residues: Lysine--tRNA ligase (502 aa).

The Mg(2+) site is built by Glu-413 and Glu-420.

The protein belongs to the class-II aminoacyl-tRNA synthetase family. As to quaternary structure, homodimer. It depends on Mg(2+) as a cofactor.

It is found in the cytoplasm. It carries out the reaction tRNA(Lys) + L-lysine + ATP = L-lysyl-tRNA(Lys) + AMP + diphosphate. In Haemophilus influenzae (strain PittGG), this protein is Lysine--tRNA ligase.